The following is a 63-amino-acid chain: Large ribosomal subunit protein bL32 (63 aa).

Residues 1–16 (MAVPKRKTSRMKRGFR) are compositionally biased toward basic residues. The tract at residues 1 to 22 (MAVPKRKTSRMKRGFRRSADAI) is disordered.

This sequence belongs to the bacterial ribosomal protein bL32 family.

This chain is Large ribosomal subunit protein bL32, found in Beijerinckia indica subsp. indica (strain ATCC 9039 / DSM 1715 / NCIMB 8712).